A 598-amino-acid polypeptide reads, in one-letter code: Elongation factor 4 (598 aa).

The tr-type G domain occupies 4-181 (KKIRNFAIIA…AIVNLIPPPQ (178 aa)). Residues 16-21 (DHGKST) and 128-131 (NKID) contribute to the GTP site.

The protein belongs to the TRAFAC class translation factor GTPase superfamily. Classic translation factor GTPase family. LepA subfamily.

Its subcellular location is the cell membrane. The catalysed reaction is GTP + H2O = GDP + phosphate + H(+). Functionally, required for accurate and efficient protein synthesis under certain stress conditions. May act as a fidelity factor of the translation reaction, by catalyzing a one-codon backward translocation of tRNAs on improperly translocated ribosomes. Back-translocation proceeds from a post-translocation (POST) complex to a pre-translocation (PRE) complex, thus giving elongation factor G a second chance to translocate the tRNAs correctly. Binds to ribosomes in a GTP-dependent manner. This Mesomycoplasma hyopneumoniae (strain 232) (Mycoplasma hyopneumoniae) protein is Elongation factor 4.